An 844-amino-acid chain; its full sequence is Meiosis-specific protein PAIR3 (844 aa).

Disordered stretches follow at residues 41 to 389 (TSSV…RERR), 418 to 506 (KLSS…RFSD), 532 to 604 (DDLF…QISI), and 616 to 669 (WLSD…EPEK). The span at 106–120 (QPDDNAIEQTGTFSF) shows a compositional bias: polar residues. Composition is skewed to basic and acidic residues over residues 122–134 (TRRE…DQLD) and 145–164 (RQVE…RMKL). Composition is skewed to polar residues over residues 191–208 (QPKS…QKVF) and 218–229 (TPAQFNSQTANK). Basic and acidic residues-rich tracts occupy residues 256–270 (RKKE…DKSG) and 324–363 (AKVE…KGEK). 2 stretches are compositionally biased toward polar residues: residues 364 to 382 (TNSF…SCSR) and 420 to 440 (SSPQ…SPQQ). The segment covering 441 to 456 (KENDNTHIPEASDRTA) has biased composition (basic and acidic residues). Residues 459–473 (NSFNSTPSPAANPSP) show a composition bias toward low complexity. Polar residues predominate over residues 545–554 (RSRSTSFTSD). A compositionally biased stretch (basic and acidic residues) spans 616–640 (WLSDVDSPDKSSIEHLGRKSHLKEG). A compositionally biased stretch (polar residues) spans 646–661 (QLTSPTHFATSGTQET). A coiled-coil region spans residues 731–765 (VNAGKSKRKRLESTFEEQQEKLRILHEKFKEEVNQ).

Expressed in pollen mother cells and the ovule tissues during meiosis.

The protein resides in the chromosome. The protein localises to the nucleus. Functionally, plays a crucial role in homologous chromosome pairing and synapsis in meiosis. Does not seem required for cytokinesis. Is essential for meiotic bouquet formation, homologous chromosome pairing and normal recombination, and synaptonemal complex (SC) assembly. Required for the proper association of PAIR2 with chromosomes. The sequence is that of Meiosis-specific protein PAIR3 from Oryza sativa subsp. japonica (Rice).